The sequence spans 264 residues: MTVHKSRIRRSRSLSVTHRIQKRPDHREKTKLYLQLKLHDLHTVFNLFPEYEQKFLAIIKLPITGKEPIDVPFSLSNHHQHTCLEFSPYANEQISKSACLHCESVSVPTSSDAMVAHLNQVNNVMQNRLYFYGFRKDMELIRMSAKQPTIFQIFYIVHNTINNIFPIMFERKQKLGMHIVFQSRTLHIPCECIKQIVAVSSGYNVYLDILQESVILTVLCETLDTNTNIHIDIGMLQKKLEEMDIPNEISDRLEKYKGHLIGFH.

Over residues 1-12 the composition is skewed to basic residues; sequence MTVHKSRIRRSR. Residues 1 to 22 are disordered; that stretch reads MTVHKSRIRRSRSLSVTHRIQK. A CCCH-type zinc finger spans residues 83–187; that stretch reads CLEFSPYANE…HIVFQSRTLH (105 aa).

Belongs to the herpesviridae NEC1 protein family. Forms a heterohexameric complex with NEC2. Interacts with capsid vertex specific component 2/CVC2; this interaction directs the capsid to the host inner nuclear membrane to initiate budding. Phosphorylated at serine residues in the N-terminus. This phosphorylation regulates the localization within the inner nuclear membrane.

It localises to the host nucleus inner membrane. Plays an essential role in virion nuclear egress, the first step of virion release from infected cell. Within the host nucleus, NEC1 interacts with the newly formed capsid through the vertexes and directs it to the inner nuclear membrane by associating with NEC2. Induces the budding of the capsid at the inner nuclear membrane as well as its envelopment into the perinuclear space. There, the NEC1/NEC2 complex promotes the fusion of the enveloped capsid with the outer nuclear membrane and the subsequent release of the viral capsid into the cytoplasm where it will reach the secondary budding sites in the host Golgi or trans-Golgi network. This chain is Nuclear egress protein 1, found in Human herpesvirus 6A (strain Uganda-1102) (HHV-6 variant A).